A 510-amino-acid chain; its full sequence is Fumarate hydratase, mitochondrial (510 aa).

Residues 1-44 (MYRALWLLARSRRLVRPPASALASAPGLSGAAVPSFWPPNAARM) constitute a mitochondrion transit peptide. N6-acetyllysine; alternate occurs at positions 61, 66, and 80. N6-succinyllysine; alternate occurs at positions 61, 66, and 80. Residues threonine 85 and threonine 90 each carry the phosphothreonine modification. N6-acetyllysine is present on lysine 94. An N6-acetyllysine; alternate mark is found at lysine 115 and lysine 122. Lysine 115 and lysine 122 each carry N6-succinyllysine; alternate. Substrate-binding positions include 145-147 (SGT), 176-179 (HPND), and 186-188 (SSN). At lysine 213 the chain carries N6-acetyllysine. Residue lysine 223 is modified to N6-acetyllysine; alternate. Lysine 223 carries the N6-succinyllysine; alternate modification. Residue threonine 234 coordinates substrate. Histidine 235 acts as the Proton donor/acceptor in catalysis. The residue at position 236 (threonine 236) is a Phosphothreonine. Lysine 256 is modified (N6-acetyllysine). Lysine 292 carries the post-translational modification N6-acetyllysine; alternate. Residue lysine 292 is modified to N6-succinyllysine; alternate. Serine 365 is an active-site residue. Substrate-binding positions include serine 366 and 371-373 (KVN). Serine 366 is subject to Phosphoserine. 2 positions are modified to N6-succinyllysine: lysine 467 and lysine 473. At lysine 502 the chain carries N6-acetyllysine.

This sequence belongs to the class-II fumarase/aspartase family. Fumarase subfamily. In terms of assembly, homotetramer. Interacts with H2AZ1. In terms of processing, phosphorylation at Thr-236 by PRKDC in response to DNA damage promotes translocation to the nucleus and recruitment to DNA double-strand breaks (DSBs).

Its subcellular location is the mitochondrion. The protein resides in the cytoplasm. It localises to the cytosol. It is found in the nucleus. The protein localises to the chromosome. The enzyme catalyses (S)-malate = fumarate + H2O. The protein operates within carbohydrate metabolism; tricarboxylic acid cycle; (S)-malate from fumarate: step 1/1. Functionally, catalyzes the reversible stereospecific interconversion of fumarate to L-malate. Experiments in other species have demonstrated that specific isoforms of this protein act in defined pathways and favor one direction over the other. Catalyzes the hydration of fumarate to L-malate in the tricarboxylic acid (TCA) cycle to facilitate a transition step in the production of energy in the form of NADH. In terms of biological role, catalyzes the dehydration of L-malate to fumarate. Fumarate metabolism in the cytosol plays a role during urea cycle and arginine metabolism; fumarate being a by-product of the urea cycle and amino-acid catabolism. Also plays a role in DNA repair by promoting non-homologous end-joining (NHEJ). In response to DNA damage and phosphorylation by PRKDC, translocates to the nucleus and accumulates at DNA double-strand breaks (DSBs): acts by catalyzing formation of fumarate, an inhibitor of KDM2B histone demethylase activity, resulting in enhanced dimethylation of histone H3 'Lys-36' (H3K36me2). This Macaca fascicularis (Crab-eating macaque) protein is Fumarate hydratase, mitochondrial.